The chain runs to 498 residues: NAD(P)H-quinone oxidoreductase chain 4, chloroplastic (498 aa).

14 consecutive transmembrane segments (helical) span residues 4–24 (FPWL…IFLF), 31–51 (VIKW…SYVF), 76–96 (FYWS…TGFI), 113–130 (LFYF…GTFS), 134–154 (ILLF…LLSM), 167–187 (FILY…GMSF), 208–228 (ALEI…SPII), 242–262 (HYST…YGLV), 272–292 (AHSI…IYAA), 305–325 (IAYS…SISD), 330–350 (GAIL…FLAG), 386–406 (LALP…GIIT), 411–431 (LLIT…LTPI), and 463–483 (FISI…DFIF).

This sequence belongs to the complex I subunit 4 family.

The protein localises to the plastid. Its subcellular location is the chloroplast thylakoid membrane. It carries out the reaction a plastoquinone + NADH + (n+1) H(+)(in) = a plastoquinol + NAD(+) + n H(+)(out). It catalyses the reaction a plastoquinone + NADPH + (n+1) H(+)(in) = a plastoquinol + NADP(+) + n H(+)(out). This chain is NAD(P)H-quinone oxidoreductase chain 4, chloroplastic, found in Glycine max (Soybean).